The sequence spans 230 residues: Claudin-2 (230 aa).

At 1-7 (MASLGLQ) the chain is on the cytoplasmic side. The helical transmembrane segment at 8-28 (LVGYILGLLGLLGTLVAMLLP) threads the bilayer. The Extracellular portion of the chain corresponds to 29–81 (SWKTSSYVGASIVTAVGFSKGLWMECATHSTGITQCDIYSTLLGLPADIQAAQ). Cysteine 54 and cysteine 64 form a disulfide bridge. The helical transmembrane segment at 82–102 (AMMVTSSAISSLACIISVVGM) threads the bilayer. Over 103–116 (RCTVFCQESRAKDR) the chain is Cytoplasmic. A helical transmembrane segment spans residues 117 to 137 (VAVAGGVFFILGGLLGFIPVA). Residues 138-162 (WNLHGILRDFYSPLVPDSMKFEIGE) are Extracellular-facing. Residues 163–183 (ALYLGIISSLFSLIAGIILCF) form a helical membrane-spanning segment. The Cytoplasmic segment spans residues 184–230 (SCSSQRNRSNYYDAYQAQPLATRSSPRPGQPPKVKSEFNSYSLTGYV). Residues 205–230 (TRSSPRPGQPPKVKSEFNSYSLTGYV) are disordered. Residue lysine 218 forms a Glycyl lysine isopeptide (Lys-Gly) (interchain with G-Cter in SUMO) linkage. Phosphoserine is present on residues serine 219 and serine 223. The span at 220–230 (EFNSYSLTGYV) shows a compositional bias: polar residues. The segment at 229–230 (YV) is interactions with TJP1, TJP2 and TJP3.

Belongs to the claudin family. As to quaternary structure, can form homo- and heteropolymers with other claudins to mediate paracellular barrier and channel functions of tight junctions in response to physiological stimuli. Homopolymers interact with CLDN3, but not CLDN1, homopolymers. Directly interacts with TJP1/ZO-1, TJP2/ZO-2 and TJP3/ZO-3. The disulfide bond is necessary for pore formation, but is not required for correct protein trafficking.

Its subcellular location is the cell junction. It is found in the tight junction. The protein resides in the cell membrane. It catalyses the reaction Na(+)(in) = Na(+)(out). The enzyme catalyses K(+)(in) = K(+)(out). The catalysed reaction is Rb(+)(in) = Rb(+)(out). It carries out the reaction Li(+)(in) = Li(+)(out). It catalyses the reaction Cs(+)(in) = Cs(+)(out). The enzyme catalyses Ca(2+)(in) = Ca(2+)(out). The catalysed reaction is methylamine(out) = methylamine(in). It carries out the reaction choline(out) = choline(in). It catalyses the reaction H2O(in) = H2O(out). Its function is as follows. Forms paracellular channels: polymerizes in tight junction strands with cation- and water-selective channels through the strands, conveying epithelial permeability in a process known as paracellular tight junction permeability. In intestinal epithelium, allows for sodium and water fluxes from the peritoneal side to the lumen of the intestine to regulate nutrient absorption and clear enteric pathogens as part of mucosal immune response. In kidney, allows passive sodium and calcium reabsorption across proximal tubules from the lumen back to the bloodstream. In the hepatobiliary tract, allows paracellular water and cation fluxes in the hepatic perivenous areas and biliary epithelium to generate bile flow and maintain osmotic gradients. This chain is Claudin-2, found in Homo sapiens (Human).